The sequence spans 211 residues: NADH-quinone oxidoreductase subunit I (211 aa).

The segment at 1–27 (MANTDRPALPHKRAVPPSRADSGPRRR) is disordered. 4Fe-4S ferredoxin-type domains are found at residues 71–101 (LNRYPDGLEKCIGCELCAWACPADAIYVEGA) and 117–146 (RVYQINYLRCIGCGLCIEACPTRALTMTYD). Residues cysteine 81, cysteine 84, cysteine 87, cysteine 91, cysteine 126, cysteine 129, cysteine 132, and cysteine 136 each coordinate [4Fe-4S] cluster.

The protein belongs to the complex I 23 kDa subunit family. In terms of assembly, NDH-1 is composed of 14 different subunits. Subunits NuoA, H, J, K, L, M, N constitute the membrane sector of the complex. [4Fe-4S] cluster serves as cofactor.

Its subcellular location is the cell membrane. It catalyses the reaction a quinone + NADH + 5 H(+)(in) = a quinol + NAD(+) + 4 H(+)(out). In terms of biological role, NDH-1 shuttles electrons from NADH, via FMN and iron-sulfur (Fe-S) centers, to quinones in the respiratory chain. The immediate electron acceptor for the enzyme in this species is believed to be menaquinone. Couples the redox reaction to proton translocation (for every two electrons transferred, four hydrogen ions are translocated across the cytoplasmic membrane), and thus conserves the redox energy in a proton gradient. The chain is NADH-quinone oxidoreductase subunit I from Mycobacterium bovis (strain ATCC BAA-935 / AF2122/97).